Reading from the N-terminus, the 27-residue chain is Phospholipase A2 2 (27 aa).

Residues 1-27 (FMKVIDPGTKWCGPGNKAADDTDNGKN) form a disordered region. The Ca(2+) site is built by tryptophan 11, glycine 13, and glycine 15. The span at 18–27 (AADDTDNGKN) shows a compositional bias: basic and acidic residues.

Belongs to the phospholipase A2 family. Ca(2+) is required as a cofactor. Expressed by the venom gland.

The protein localises to the secreted. It carries out the reaction a 1,2-diacyl-sn-glycero-3-phosphocholine + H2O = a 1-acyl-sn-glycero-3-phosphocholine + a fatty acid + H(+). Functionally, PLA2 catalyzes the calcium-dependent hydrolysis of the 2-acyl groups in 3-sn-phosphoglycerides. The chain is Phospholipase A2 2 from Opisthacanthus cayaporum (South American scorpion).